A 266-amino-acid polypeptide reads, in one-letter code: Glucosamine-6-phosphate deaminase (266 aa).

Asp72 serves as the catalytic Proton acceptor; for enolization step. The active-site For ring-opening step is the Asp141. His143 serves as the catalytic Proton acceptor; for ring-opening step. Residue Glu148 is the For ring-opening step of the active site.

This sequence belongs to the glucosamine/galactosamine-6-phosphate isomerase family. NagB subfamily. In terms of assembly, homohexamer.

It carries out the reaction alpha-D-glucosamine 6-phosphate + H2O = beta-D-fructose 6-phosphate + NH4(+). It functions in the pathway amino-sugar metabolism; N-acetylneuraminate degradation; D-fructose 6-phosphate from N-acetylneuraminate: step 5/5. Its activity is regulated as follows. Allosterically activated by N-acetylglucosamine 6-phosphate (GlcNAc6P). Functionally, catalyzes the reversible isomerization-deamination of glucosamine 6-phosphate (GlcN6P) to form fructose 6-phosphate (Fru6P) and ammonium ion. This is Glucosamine-6-phosphate deaminase from Enterobacter sp. (strain 638).